The following is a 160-amino-acid chain: 6,7-dimethyl-8-ribityllumazine synthase (160 aa).

5-amino-6-(D-ribitylamino)uracil-binding positions include tryptophan 27, 59-61, and 81-83; these read AIE and VVI. Residue 86–87 coordinates (2S)-2-hydroxy-3-oxobutyl phosphate; the sequence is DT. Histidine 89 functions as the Proton donor in the catalytic mechanism. Asparagine 114 serves as a coordination point for 5-amino-6-(D-ribitylamino)uracil. Arginine 128 contacts (2S)-2-hydroxy-3-oxobutyl phosphate.

The protein belongs to the DMRL synthase family. In terms of assembly, homopentamer.

The enzyme catalyses (2S)-2-hydroxy-3-oxobutyl phosphate + 5-amino-6-(D-ribitylamino)uracil = 6,7-dimethyl-8-(1-D-ribityl)lumazine + phosphate + 2 H2O + H(+). It participates in cofactor biosynthesis; riboflavin biosynthesis; riboflavin from 2-hydroxy-3-oxobutyl phosphate and 5-amino-6-(D-ribitylamino)uracil: step 1/2. In terms of biological role, catalyzes the formation of 6,7-dimethyl-8-ribityllumazine by condensation of 5-amino-6-(D-ribitylamino)uracil with 3,4-dihydroxy-2-butanone 4-phosphate. This is the penultimate step in the biosynthesis of riboflavin. This chain is 6,7-dimethyl-8-ribityllumazine synthase, found in Mycobacterium leprae (strain Br4923).